The primary structure comprises 66 residues: Large ribosomal subunit protein bL33c (66 aa).

This sequence belongs to the bacterial ribosomal protein bL33 family.

Its subcellular location is the plastid. The protein localises to the chloroplast. This is Large ribosomal subunit protein bL33c from Morus indica (Mulberry).